The following is a 614-amino-acid chain: Spastin (614 aa).

Residues 1–45 (MNSPGGRGKKKGSGGPSSPVPPRPPPPCQARSRPAPKPAPPPQSP) are disordered. Residues 1–50 (MNSPGGRGKKKGSGGPSSPVPPRPPPPCQARSRPAPKPAPPPQSPHKRNL) form a required for nuclear localization region. The Cytoplasmic segment spans residues 1–56 (MNSPGGRGKKKGSGGPSSPVPPRPPPPCQARSRPAPKPAPPPQSPHKRNLYYFSYP). The interval 1–80 (MNSPGGRGKK…LGLLFVWLCQ (80 aa)) is required for interaction with ATL1. Residues 1 to 192 (MNSPGGRGKK…LVMAKDRLQL (192 aa)) are required for midbody localization. The required for interaction with RTN1 stretch occupies residues 1-298 (MNSPGGRGKK…STPKTNRTNK (298 aa)). A Nuclear localization signal motif is present at residues 4–11 (PGGRGKKK). Composition is skewed to pro residues over residues 18–28 (SPVPPRPPPPC) and 35–44 (APKPAPPPQS). Residues 50-87 (LYYFSYPLFLGFALLRLVAFHLGLLFVWLCQRFSRALM) are required for interaction with SSNA1 and microtubules. Residues 57-77 (LFLGFALLRLVAFHLGLLFVW) constitute an intramembrane region (helical). The Nuclear export signal motif lies at 59 to 67 (LGFALLRLV). Residues 78-614 (LCQRFSRALM…WNKDFGDTTV (537 aa)) lie on the Cytoplasmic side of the membrane. The tract at residues 110-194 (EAERVRAFHK…MAKDRLQLLE (85 aa)) is sufficient for interaction with CHMP1B. Residues 112–198 (ERVRAFHKQA…RLQLLEKLQP (87 aa)) are required for interaction with microtubules. The MIT domain maps to 118 to 193 (HKQAFEYISV…VMAKDRLQLL (76 aa)). The tract at residues 220-310 (NGHLQSESGA…TPTTAARKKK (91 aa)) is disordered. A sufficient for microtubule severing region spans residues 226-614 (ESGAVPKRKD…WNKDFGDTTV (389 aa)). Phosphoserine is present on residues S243 and S266. Positions 268–326 (SGLSMVSGVRQGPGSAAATHKSTPKTNRTNKPSTPTTAARKKKDLKNFRNVDSNLANLI) are required for interaction with microtubules and microtubule severing. The segment covering 287–304 (HKSTPKTNRTNKPSTPTT) has biased composition (polar residues). The residue at position 304 (T304) is a Phosphothreonine. A Nuclear localization signal motif is present at residues 307-310 (RKKK). 380–387 (GPPGNGKT) provides a ligand contact to ATP. S595 is subject to Phosphoserine.

The protein belongs to the AAA ATPase family. Spastin subfamily. As to quaternary structure, homohexamer. Mostly monomeric, but assembles into hexameric structure for short periods of time. Oligomerization seems to be a prerequisite for catalytic activity. Binding to ATP in a cleft between two adjacent subunits stabilizes the homohexameric form. Binds to microtubules at least in part via the alpha-tubulin and beta-tubulin tails. The hexamer adopts a ring conformation through which microtubules pass prior to being severed. Does not interact strongly with tubulin heterodimers. Interacts (via MIT domain) with CHMP1B; the interaction is direct. Interacts with SSNA1. Interacts with ATL1. Interacts with RTN1. Interacts with ZFYVE27. Interacts with REEP1. Interacts (via MIT domain) with IST1.

It localises to the membrane. The protein localises to the endoplasmic reticulum. Its subcellular location is the midbody. The protein resides in the cytoplasm. It is found in the cytoskeleton. It localises to the microtubule organizing center. The protein localises to the centrosome. Its subcellular location is the perinuclear region. The protein resides in the nucleus. It is found in the spindle. It localises to the cell projection. The protein localises to the axon. It carries out the reaction n ATP + n H2O + a microtubule = n ADP + n phosphate + (n+1) alpha/beta tubulin heterodimers.. With respect to regulation, allosteric enzyme with a cooperative mechanism; at least two neighbor subunits influence each other strongly in spastin hexamers. Microtubule binding promotes cooperative interactions among spastin subunits. ATP-dependent microtubule severing protein that specifically recognizes and cuts microtubules that are polyglutamylated. Preferentially recognizes and acts on microtubules decorated with short polyglutamate tails: severing activity increases as the number of glutamates per tubulin rises from one to eight, but decreases beyond this glutamylation threshold. Severing activity is not dependent on tubulin acetylation or detyrosination. Microtubule severing promotes reorganization of cellular microtubule arrays and the release of microtubules from the centrosome following nucleation. It is critical for the biogenesis and maintenance of complex microtubule arrays in axons, spindles and cilia. SPAST is involved in abscission step of cytokinesis and nuclear envelope reassembly during anaphase in cooperation with the ESCRT-III complex. Recruited at the midbody, probably by IST1, and participates in membrane fission during abscission together with the ESCRT-III complex. Recruited to the nuclear membrane by IST1 and mediates microtubule severing, promoting nuclear envelope sealing and mitotic spindle disassembly during late anaphase. Required for membrane traffic from the endoplasmic reticulum (ER) to the Golgi and endosome recycling. Recruited by IST1 to endosomes and regulates early endosomal tubulation and recycling by mediating microtubule severing. Probably plays a role in axon growth and the formation of axonal branches. The polypeptide is Spastin (Bos taurus (Bovine)).